The primary structure comprises 597 residues: Elongation factor 4 (597 aa).

Residues 2-184 (DHIRNFSIIA…SLIAKVPPPK (183 aa)) form the tr-type G domain. GTP is bound by residues 14 to 19 (DHGKST) and 131 to 134 (NKID).

The protein belongs to the TRAFAC class translation factor GTPase superfamily. Classic translation factor GTPase family. LepA subfamily.

Its subcellular location is the cell inner membrane. The enzyme catalyses GTP + H2O = GDP + phosphate + H(+). Functionally, required for accurate and efficient protein synthesis under certain stress conditions. May act as a fidelity factor of the translation reaction, by catalyzing a one-codon backward translocation of tRNAs on improperly translocated ribosomes. Back-translocation proceeds from a post-translocation (POST) complex to a pre-translocation (PRE) complex, thus giving elongation factor G a second chance to translocate the tRNAs correctly. Binds to ribosomes in a GTP-dependent manner. This Burkholderia pseudomallei (strain 1710b) protein is Elongation factor 4.